A 401-amino-acid polypeptide reads, in one-letter code: S-adenosylmethionine synthase 1 (401 aa).

ATP is bound at residue H15. D17 is a binding site for Mg(2+). Position 43 (E43) interacts with K(+). Positions 56 and 98 each coordinate L-methionine. The flexible loop stretch occupies residues 98–108 (QSPDIAQGVDK). ATP-binding positions include 173 to 175 (DGK), 246 to 247 (RF), D255, 261 to 262 (RK), A278, and K282. D255 is an L-methionine binding site. Residue K286 participates in L-methionine binding.

Belongs to the AdoMet synthase family. In terms of assembly, homotetramer; dimer of dimers. The cofactor is Mg(2+). Requires K(+) as cofactor.

The protein resides in the cytoplasm. The catalysed reaction is L-methionine + ATP + H2O = S-adenosyl-L-methionine + phosphate + diphosphate. It functions in the pathway amino-acid biosynthesis; S-adenosyl-L-methionine biosynthesis; S-adenosyl-L-methionine from L-methionine: step 1/1. In terms of biological role, catalyzes the formation of S-adenosylmethionine (AdoMet) from methionine and ATP. The overall synthetic reaction is composed of two sequential steps, AdoMet formation and the subsequent tripolyphosphate hydrolysis which occurs prior to release of AdoMet from the enzyme. This Frankia casuarinae (strain DSM 45818 / CECT 9043 / HFP020203 / CcI3) protein is S-adenosylmethionine synthase 1.